A 322-amino-acid chain; its full sequence is RING finger protein 113B (322 aa).

Residues 24 to 92 (KPGRKGAAGL…EEAAPESLDV (69 aa)) are disordered. Positions 46–60 (SSSSGDEGDTVAQPP) are enriched in low complexity. The segment at 190–218 (DYQPDICKDYKETGFCGFGDSCKFLHDRS) adopts a C3H1-type zinc-finger fold. An RING-type zinc finger spans residues 256–294 (CFICRQAFQNPVVTKCRHYFCESCALEHFRATPRCYICD).

This is RING finger protein 113B (RNF113B) from Homo sapiens (Human).